The chain runs to 400 residues: Acetate kinase (400 aa).

N10 is a binding site for Mg(2+). ATP is bound at residue K17. R91 lines the substrate pocket. Catalysis depends on D148, which acts as the Proton donor/acceptor. ATP contacts are provided by residues 208-212 (HLGNG), 283-285 (DCR), and 331-335 (GIGEN). Residue E385 coordinates Mg(2+).

Belongs to the acetokinase family. In terms of assembly, homodimer. It depends on Mg(2+) as a cofactor. Requires Mn(2+) as cofactor.

Its subcellular location is the cytoplasm. It carries out the reaction acetate + ATP = acetyl phosphate + ADP. Its pathway is metabolic intermediate biosynthesis; acetyl-CoA biosynthesis; acetyl-CoA from acetate: step 1/2. In terms of biological role, catalyzes the formation of acetyl phosphate from acetate and ATP. Can also catalyze the reverse reaction. This is Acetate kinase from Shewanella frigidimarina (strain NCIMB 400).